Consider the following 147-residue polypeptide: Ribonuclease P protein component 2 (147 aa).

The protein belongs to the eukaryotic/archaeal RNase P protein component 2 family. In terms of assembly, consists of a catalytic RNA component and at least 4-5 protein subunits.

It is found in the cytoplasm. It catalyses the reaction Endonucleolytic cleavage of RNA, removing 5'-extranucleotides from tRNA precursor.. Its function is as follows. Part of ribonuclease P, a protein complex that generates mature tRNA molecules by cleaving their 5'-ends. In Methanocorpusculum labreanum (strain ATCC 43576 / DSM 4855 / Z), this protein is Ribonuclease P protein component 2.